A 318-amino-acid polypeptide reads, in one-letter code: Thymidylate synthase (318 aa).

DUMP is bound by residues Arg-25 and 180-181; that span reads RR. The Nucleophile role is filled by Cys-200. DUMP is bound by residues 220–223, Asn-231, and 261–263; these read RSGD and HIY. Asp-223 is a binding site for (6R)-5,10-methylene-5,6,7,8-tetrahydrofolate. Ala-317 is a (6R)-5,10-methylene-5,6,7,8-tetrahydrofolate binding site.

This sequence belongs to the thymidylate synthase family. Bacterial-type ThyA subfamily. As to quaternary structure, homodimer.

The protein localises to the cytoplasm. It carries out the reaction dUMP + (6R)-5,10-methylene-5,6,7,8-tetrahydrofolate = 7,8-dihydrofolate + dTMP. The protein operates within pyrimidine metabolism; dTTP biosynthesis. Catalyzes the reductive methylation of 2'-deoxyuridine-5'-monophosphate (dUMP) to 2'-deoxythymidine-5'-monophosphate (dTMP) while utilizing 5,10-methylenetetrahydrofolate (mTHF) as the methyl donor and reductant in the reaction, yielding dihydrofolate (DHF) as a by-product. This enzymatic reaction provides an intracellular de novo source of dTMP, an essential precursor for DNA biosynthesis. In Lactobacillus johnsonii (strain CNCM I-12250 / La1 / NCC 533), this protein is Thymidylate synthase.